The chain runs to 273 residues: NAD-dependent protein deacylase (273 aa).

In terms of domain architecture, Deacetylase sirtuin-type spans Arg-20–Gly-272. Gly-48–Trp-67 contacts NAD(+). The substrate site is built by Tyr-92 and Arg-95. Gln-129–Asp-132 lines the NAD(+) pocket. Catalysis depends on His-147, which acts as the Proton acceptor. Zn(2+) is bound by residues Cys-155 and Cys-174. Residues Gly-214–Ser-216, Asn-240–Glu-242, and Ala-258 contribute to the NAD(+) site.

The protein belongs to the sirtuin family. Class III subfamily. It depends on Zn(2+) as a cofactor.

It is found in the cytoplasm. It catalyses the reaction N(6)-acetyl-L-lysyl-[protein] + NAD(+) + H2O = 2''-O-acetyl-ADP-D-ribose + nicotinamide + L-lysyl-[protein]. The catalysed reaction is N(6)-succinyl-L-lysyl-[protein] + NAD(+) + H2O = 2''-O-succinyl-ADP-D-ribose + nicotinamide + L-lysyl-[protein]. It carries out the reaction N(6)-(2-hydroxyisobutanoyl)-L-lysyl-[protein] + NAD(+) + H2O = 2''-O-(2-hydroxyisobutanoyl)-ADP-D-ribose + nicotinamide + L-lysyl-[protein]. Its function is as follows. NAD-dependent lysine deacetylase that specifically removes acetyl groups on target proteins. Also acts as a protein-lysine deacylase by mediating protein desuccinylation and de-2-hydroxyisobutyrylation. Modulates the activities of several proteins which are inactive in their acylated form. In Salmonella typhi, this protein is NAD-dependent protein deacylase.